We begin with the raw amino-acid sequence, 436 residues long: Homeobox protein PKNOX1 (436 aa).

The tract at residues 23–50 (ELKTEQDPNCSDPDAEGVSPPPIESQTP) is disordered. Phosphoserine occurs at positions 33 and 41. The MEIS N-terminal domain occupies 80–163 (GSEGTTSASF…MNSETLLSGE (84 aa)). The homeobox; TALE-type DNA-binding region spans 259–321 (SKNKRGVLPK…NARRRILQPM (63 aa)). Residues 401–436 (AGQSEDESVDSTEDEGGALAPTHISGLVLENSDSLQ) are disordered. Residues 404-416 (SEDESVDSTEDEG) are compositionally biased toward acidic residues.

Belongs to the TALE/MEIS homeobox family. Interacts with MN1.

It localises to the nucleus. Functionally, activates transcription in the presence of PBX1A and HOXA1. Its function is as follows. (Microbial infection) In complex with PBX1, binds to the 5'-TGATTGAC-3' consensus sequence in the U5 region of Moloney murine leukemia virus and promotes viral transcription. This is Homeobox protein PKNOX1 from Mus musculus (Mouse).